Consider the following 568-residue polypeptide: Circadian clock protein KaiC2 (568 aa).

2 consecutive KaiC domains span residues 11–250 and 251–485; these read IKCP…SVSQ and ERIS…LTGT. 2 positions are modified to phosphoserine; by autocatalysis: serine 423 and serine 424.

Belongs to the KaiC family. As to quaternary structure, multimerizes, probably forming homohexamers, no interaction with KaiC1 or KaiC3 is seen.

It carries out the reaction L-seryl-[protein] + ATP = O-phospho-L-seryl-[protein] + ADP + H(+). The enzyme catalyses L-threonyl-[protein] + ATP = O-phospho-L-threonyl-[protein] + ADP + H(+). The catalysed reaction is ATP + H2O = ADP + phosphate + H(+). Functionally, autophosphorylates independently of KaiA. This is Circadian clock protein KaiC2 from Synechocystis sp. (strain ATCC 27184 / PCC 6803 / Kazusa).